A 104-amino-acid polypeptide reads, in one-letter code: Large ribosomal subunit protein uL23 (104 aa).

This sequence belongs to the universal ribosomal protein uL23 family. In terms of assembly, part of the 50S ribosomal subunit. Contacts protein L29, and trigger factor when it is bound to the ribosome.

Its function is as follows. One of the early assembly proteins it binds 23S rRNA. One of the proteins that surrounds the polypeptide exit tunnel on the outside of the ribosome. Forms the main docking site for trigger factor binding to the ribosome. The protein is Large ribosomal subunit protein uL23 of Ralstonia nicotianae (strain ATCC BAA-1114 / GMI1000) (Ralstonia solanacearum).